Here is a 579-residue protein sequence, read N- to C-terminus: Membrane frizzled-related protein (579 aa).

Over 1 to 69 (MKDFSDVILC…RPDCRFSWLC (69 aa)) the chain is Cytoplasmic. The helical; Signal-anchor for type II membrane protein transmembrane segment at 70 to 90 (VLLLSSLLLLLLGLLVAIILA) threads the bilayer. Residues 91 to 579 (QLQAAPPSGA…AADLEACAQP (489 aa)) lie on the Extracellular side of the membrane. The segment at 100–143 (ASHSPLPAGGLTTTTTTPTITTSQAAGTPKGQQESGVSPSPQST) is disordered. Over residues 111–121 (TTTTTTPTITT) the composition is skewed to low complexity. The span at 122 to 143 (SQAAGTPKGQQESGVSPSPQST) shows a compositional bias: polar residues. 2 disulfide bridges follow: Cys-144–Cys-170 and Cys-197–Cys-216. Residues 144–253 (CGGLLSGPRG…FGFHAWYQAM (110 aa)) form the CUB 1 domain. An N-linked (GlcNAc...) asparagine glycan is attached at Asn-227. Residues 259–295 (SCAHDEFRCDQLICLLPDSVCDGFANCADGSDETNCS) enclose the LDL-receptor class A 1 domain. Disulfide bonds link Cys-260–Cys-272, Cys-267–Cys-285, Cys-279–Cys-294, Cys-301–Cys-327, and Cys-354–Cys-377. The region spanning 301–414 (CGGNLTGLQG…GGFSATYLAF (114 aa)) is the CUB 2 domain. Residue Asn-415 is glycosylated (N-linked (GlcNAc...) asparagine). In terms of domain architecture, LDL-receptor class A 2 spans 420 to 455 (PCGPSELSCQAGGCKGVQWMCDMWRDCTDGSDDNCS). 8 disulfides stabilise this stretch: Cys-421-Cys-433, Cys-428-Cys-446, Cys-440-Cys-454, Cys-466-Cys-528, Cys-474-Cys-521, Cys-512-Cys-549, Cys-538-Cys-576, and Cys-542-Cys-564. The FZ domain occupies 461–579 (PPELACEPVQ…AADLEACAQP (119 aa)).

Interacts with C1QTNF5. As to expression, specifically expressed in brain. Strongly expressed in medulla oblongata and to a lower extent in hippocampus and corpus callosum. Expressed in keratinocytes.

It localises to the apical cell membrane. May play a role in eye development. In Homo sapiens (Human), this protein is Membrane frizzled-related protein (MFRP).